Reading from the N-terminus, the 585-residue chain is Dihydroxy-acid dehydratase, mitochondrial (585 aa).

A mitochondrion-targeting transit peptide spans 1-20; that stretch reads MGLLTKVATSRQFSTTRCVA. A [2Fe-2S] cluster-binding site is contributed by Cys-70. Asp-102 serves as a coordination point for Mg(2+). Residue Cys-143 coordinates [2Fe-2S] cluster. Asp-144 is a Mg(2+) binding site. Cys-221 contacts [2Fe-2S] cluster. Glu-474 provides a ligand contact to Mg(2+). Catalysis depends on Ser-500, which acts as the Proton acceptor.

Belongs to the IlvD/Edd family. The cofactor is [2Fe-2S] cluster. Requires Mg(2+) as cofactor.

It is found in the mitochondrion. It catalyses the reaction (2R)-2,3-dihydroxy-3-methylbutanoate = 3-methyl-2-oxobutanoate + H2O. It carries out the reaction (2R,3R)-2,3-dihydroxy-3-methylpentanoate = (S)-3-methyl-2-oxopentanoate + H2O. Its pathway is amino-acid biosynthesis; L-isoleucine biosynthesis; L-isoleucine from 2-oxobutanoate: step 3/4. The protein operates within amino-acid biosynthesis; L-valine biosynthesis; L-valine from pyruvate: step 3/4. Catalytic activity is inactivated under iron-limiting conditions. In terms of biological role, dihydroxyacid dehydratase that catalyzes the third step in the common pathway leading to biosynthesis of branched-chain amino acids. Catalyzes the dehydration of (2R,3R)-2,3-dihydroxy-3-methylpentanoate (2,3-dihydroxy-3-methylvalerate) into 2-oxo-3-methylpentanoate (2-oxo-3-methylvalerate) and of (2R)-2,3-dihydroxy-3-methylbutanoate (2,3-dihydroxyisovalerate) into 2-oxo-3-methylbutanoate (2-oxoisovalerate), the penultimate precursor to L-isoleucine and L-valine, respectively. Required for the synthesis of alpha-isopropylmalate which modulates the activity of LEU3 and subsequently regulates the expression of LEU1. The chain is Dihydroxy-acid dehydratase, mitochondrial from Saccharomyces cerevisiae (strain ATCC 204508 / S288c) (Baker's yeast).